The sequence spans 507 residues: Phosphoenolpyruvate carboxylase (507 aa).

The interval methionine 1–phenylalanine 25 is disordered.

It belongs to the PEPCase type 2 family. In terms of assembly, homotetramer. The cofactor is Mg(2+).

The catalysed reaction is oxaloacetate + phosphate = phosphoenolpyruvate + hydrogencarbonate. In terms of biological role, catalyzes the irreversible beta-carboxylation of phosphoenolpyruvate (PEP) to form oxaloacetate (OAA), a four-carbon dicarboxylic acid source for the tricarboxylic acid cycle. This is Phosphoenolpyruvate carboxylase from Oenococcus oeni (strain ATCC BAA-331 / PSU-1).